We begin with the raw amino-acid sequence, 433 residues long: Histidinol dehydrogenase (433 aa).

NAD(+) contacts are provided by tyrosine 133, glutamine 194, and asparagine 217. Positions 240, 262, and 265 each coordinate substrate. The Zn(2+) site is built by glutamine 262 and histidine 265. Residues glutamate 330 and histidine 331 each act as proton acceptor in the active site. Substrate-binding residues include histidine 331, aspartate 364, glutamate 418, and histidine 423. Aspartate 364 contacts Zn(2+). Histidine 423 lines the Zn(2+) pocket.

It belongs to the histidinol dehydrogenase family. Zn(2+) is required as a cofactor.

It carries out the reaction L-histidinol + 2 NAD(+) + H2O = L-histidine + 2 NADH + 3 H(+). Its pathway is amino-acid biosynthesis; L-histidine biosynthesis; L-histidine from 5-phospho-alpha-D-ribose 1-diphosphate: step 9/9. Its function is as follows. Catalyzes the sequential NAD-dependent oxidations of L-histidinol to L-histidinaldehyde and then to L-histidine. The sequence is that of Histidinol dehydrogenase from Hydrogenovibrio crunogenus (strain DSM 25203 / XCL-2) (Thiomicrospira crunogena).